Here is a 1285-residue protein sequence, read N- to C-terminus: Tat-binding homolog 7 (1285 aa).

4 disordered regions span residues 1–95 (MARS…LTYR), 121–173 (MSDD…RTRR), 224–243 (GREE…EKEQ), and 258–359 (QEDE…ERGR). Acidic residues-rich tracts occupy residues 226–237 (EEEEEGDEEEAE) and 258–270 (QEDE…ESSE). A compositionally biased stretch (basic residues) spans 311–325 (NRHHRNRNTSNRRRR). Position 446–453 (446–453 (GPPGTGKT)) interacts with ATP. A Bromo domain is found at 928–1032 (ALQRQMRMFF…NTFRDAIDDM (105 aa)). The interval 1100–1196 (EKLKEKLGIS…PTIQSSSSQE (97 aa)) is disordered. Over residues 1136 to 1149 (KLNKKKKDQKRNKK) the composition is skewed to basic residues. Acidic residues predominate over residues 1155-1175 (PDGDDTEETEEAVAENNVDAD).

It belongs to the AAA ATPase family.

In terms of biological role, thought to form a complex that enhances transcription from repetitive DNA sequences by modulating chromatin structure. This chain is Tat-binding homolog 7, found in Caenorhabditis briggsae.